The chain runs to 130 residues: Small ribosomal subunit protein uS8 (130 aa).

The protein belongs to the universal ribosomal protein uS8 family. As to quaternary structure, part of the 30S ribosomal subunit. Contacts proteins S5 and S12.

One of the primary rRNA binding proteins, it binds directly to 16S rRNA central domain where it helps coordinate assembly of the platform of the 30S subunit. In Stutzerimonas stutzeri (strain A1501) (Pseudomonas stutzeri), this protein is Small ribosomal subunit protein uS8.